The primary structure comprises 122 residues: MEASALTSSAVTSVAKVVRVASGSAVVLPLARIATVVIGGVVAMAAVPMVLSAMGFTAAGIASSSIAAKMMSAAAIANGGGVASGSLVATLQSLGATGLSGLTKFILGSIGSAIAAVIARFY.

A mitochondrion-targeting transit peptide spans 1–33; the sequence is MEASALTSSAVTSVAKVVRVASGSAVVLPLARI. Residues 34–57 form a helical membrane-spanning segment; sequence ATVVIGGVVAMAAVPMVLSAMGFT. Lysine 69 participates in a covalent cross-link: Glycyl lysine isopeptide (Lys-Gly) (interchain with G-Cter in ubiquitin). The next 2 membrane-spanning stretches (helical) occupy residues 71–91 and 99–119; these read MSAA…VATL and LSGL…AVIA. The tract at residues 76–122 is mediates interaction with SKP2 and hepatitis C virus non-structural protein NS5A; that stretch reads IANGGGVASGSLVATLQSLGATGLSGLTKFILGSIGSAIAAVIARFY. Residues 103–112 are required for hepatitis C virus non-structural protein NS5A degradation; that stretch reads TKFILGSIGS.

It belongs to the IFI6/IFI27 family. In terms of assembly, homodimer. Interacts with hepatitis C virus/HCV non-structural protein NS5A; promotes the ubiquitin-mediated proteasomal degradation of NS5A. Interacts with SKP2; promotes the ubiquitin-mediated proteasomal degradation of NS5A. Interacts with NR4A1. May interact with BCL2. Post-translationally, ubiquitinated by TRIM21 via 'Lys-6'-linked ubiquitin chains leading to IFI27 mitochondrial migration.

It localises to the mitochondrion membrane. The protein resides in the nucleus inner membrane. The protein localises to the endoplasmic reticulum membrane. In terms of biological role, probable adapter protein involved in different biological processes. Part of the signaling pathways that lead to apoptosis. Involved in type-I interferon-induced apoptosis characterized by a rapid and robust release of cytochrome C from the mitochondria and activation of BAX and caspases 2, 3, 6, 8 and 9. Also functions in TNFSF10-induced apoptosis. May also have a function in the nucleus, where it may be involved in the interferon-induced negative regulation of the transcriptional activity of NR4A1, NR4A2 and NR4A3 through the enhancement of XPO1-mediated nuclear export of these nuclear receptors. May thereby play a role in the vascular response to injury. In the innate immune response, has an antiviral activity towards hepatitis C virus/HCV. May prevent the replication of the virus by recruiting both the hepatitis C virus non-structural protein 5A/NS5A and the ubiquitination machinery via SKP2, promoting the ubiquitin-mediated proteasomal degradation of NS5A. Also promotes virus-induced pyroptosis by activating CASP3 in the mitochondria after 'Lys-6'-linked ubiquitination by TRIM21. This is Interferon alpha-inducible protein 27, mitochondrial from Homo sapiens (Human).